The chain runs to 279 residues: Methyltransferase trt5 (279 aa).

S-adenosyl-L-methionine is bound by residues 124 to 125 and 152 to 153; these read DI and DV.

This sequence belongs to the class I-like SAM-binding methyltransferase superfamily. In terms of assembly, homodimer.

The protein operates within secondary metabolite biosynthesis; terpenoid biosynthesis. Its function is as follows. Methyltransferase; part of the gene cluster that mediates the biosynthesis of terretonin, a fungal meroterpenoid that acts as a mycotoxin. The first step of the pathway is the synthesis of 3,5-dimethylorsellinic acid (DMOA) by the polyketide synthase trt4. DMOA is then prenylated into farnesyl-DMOA by the polyprenyl transferase trt2. Methylation by the methyltransferase trt5 then leads to farnesyl-DMOA methyl ester which is further subject to epoxidation by the FAD-dependent monooxygenase trt8 to yield epoxyfarnesyl-DMOA methyl ester. Cyclization of epoxyfarnesyl-DMOA methyl ester by the terpene cyclase trt1 leads to a tetracycle intermediate which is in turn converted to preterretonin. Dehydrogenase trt9 comes next to transform preterretonin to preterrenoid. The FAD-dependent monooxygenase trt3 is then required for the C-hydroxylation at C16 of preterrenoid to yield terrenoid. The cytochrome P450 trt6 catalyzes three successive oxidations to transform terrenoid into an unstable intermediate, which then undergoes the D-ring expansion and unusual rearrangement of the methoxy group to afford the core skeleton of terretonin. Trt14 catalyzes the D-ring expansion of terretonin involving intramolecular methoxy rearrangement as well as the hydrolysis of the expanded D-ring and the methyl ester moiety. Finally, the nonheme iron-dependent dioxygenase trt7 accomplishes the last two oxidation reactions steps to complete the biosynthesis of terretonin. Terretonin C is produced via spontaneous decarboxylation of the terretonin precursor. Another shunt product of the terretonin biosynthesis is dihydrofarnesyl-DMOA, derived from epoxyfarnesyl-DMOA through hydrolysis of the epoxide. This chain is Methyltransferase trt5, found in Aspergillus terreus (strain NIH 2624 / FGSC A1156).